The sequence spans 189 residues: GTPase HRas (189 aa).

Residue 10–17 (GARGVGKS) coordinates GTP. The short motif at 32 to 40 (YDPTIEDSY) is the Effector region element. Residues 57–61 (DTAGQ) and 116–119 (NKCD) each bind GTP. Residues Cys181 and Cys184 are each lipidated (S-palmitoyl cysteine; by host). Cys186 bears the Cysteine methyl ester; by host mark. The S-farnesyl cysteine; by host moiety is linked to residue Cys186. The propeptide at 187–189 (VLS) is removed in mature form.

It belongs to the small GTPase superfamily. Ras family.

The protein localises to the host cell membrane. It carries out the reaction GTP + H2O = GDP + phosphate + H(+). With respect to regulation, alternates between an inactive form bound to GDP and an active form bound to GTP. Activated by a guanine nucleotide-exchange factor (GEF) and inactivated by a GTPase-activating protein (GAP). This chain is GTPase HRas (H-RAS), found in Mus musculus (Mouse).